The chain runs to 629 residues: tRNA uridine 5-carboxymethylaminomethyl modification enzyme MnmG (629 aa).

Residues 13–18 (GGGHAG), valine 125, and serine 180 contribute to the FAD site. 273–287 (GPRYCPSIEDKVMRF) is an NAD(+) binding site. Glutamine 370 provides a ligand contact to FAD.

It belongs to the MnmG family. Homodimer. Heterotetramer of two MnmE and two MnmG subunits. It depends on FAD as a cofactor.

It localises to the cytoplasm. Functionally, NAD-binding protein involved in the addition of a carboxymethylaminomethyl (cmnm) group at the wobble position (U34) of certain tRNAs, forming tRNA-cmnm(5)s(2)U34. This is tRNA uridine 5-carboxymethylaminomethyl modification enzyme MnmG from Escherichia coli O139:H28 (strain E24377A / ETEC).